A 341-amino-acid polypeptide reads, in one-letter code: DNA-directed RNA polymerase subunit alpha (341 aa).

The alpha N-terminal domain (alpha-NTD) stretch occupies residues 1-233; it reads MIRDEIPISA…NLFIPFLHAE (233 aa). Positions 265-341 are alpha C-terminal domain (alpha-CTD); the sequence is TKGVTFKHIF…NLPKNKLHFH (77 aa).

It belongs to the RNA polymerase alpha chain family. As to quaternary structure, in plastids the minimal PEP RNA polymerase catalytic core is composed of four subunits: alpha, beta, beta', and beta''. When a (nuclear-encoded) sigma factor is associated with the core the holoenzyme is formed, which can initiate transcription.

Its subcellular location is the plastid. The protein localises to the chloroplast. It carries out the reaction RNA(n) + a ribonucleoside 5'-triphosphate = RNA(n+1) + diphosphate. Its function is as follows. DNA-dependent RNA polymerase catalyzes the transcription of DNA into RNA using the four ribonucleoside triphosphates as substrates. The sequence is that of DNA-directed RNA polymerase subunit alpha from Takakia lepidozioides (Moss).